Reading from the N-terminus, the 401-residue chain is L-threonine ammonia-lyase (401 aa).

K51 carries the post-translational modification N6-(pyridoxal phosphate)lysine. Pyridoxal 5'-phosphate is bound by residues N78, 178 to 181 (GGGL), and S301. Residues 326–401 (FIETFVMDRP…AKGYEVRIVG (76 aa)) enclose the ACT domain.

It belongs to the serine/threonine dehydratase family. Homotetramer. It depends on pyridoxal 5'-phosphate as a cofactor.

It catalyses the reaction L-threonine = 2-oxobutanoate + NH4(+). It carries out the reaction L-serine = pyruvate + NH4(+). The protein operates within amino-acid biosynthesis; L-isoleucine biosynthesis; 2-oxobutanoate from L-threonine: step 1/1. Its activity is regulated as follows. Activity is insensitive to allosteric regulators L-valine and L-isoleucine at low concentrations, while these L-amino acids are inhibitors at high concentrations. Is insensitive to ammonium chloride and AMP. Inhibited in the presence of aminoxyacetic acid (AOAA), an inhibitor of pyridoxal phosphate-dependent enzymes. Catalyzes the conversion of L-threonine to 2-oxobutanoate and ammonia. Can also use L-serine, but the catalytic efficiency toward L-threonine is about sixfold higher than that toward L-serine. Also shows weak activity toward L-allo-threonine, but cannot use the corresponding D-amino acids. Does not exhibit racemase activity toward various amino acids, including serine. Physiologically, is likely involved in the threonine-dependent pathway of isoleucine biosynthesis. In Thermotoga maritima (strain ATCC 43589 / DSM 3109 / JCM 10099 / NBRC 100826 / MSB8), this protein is L-threonine ammonia-lyase.